The following is a 180-amino-acid chain: MLEQNIKKVLYSEEEIIVKTKELGAQLTKDYAGKNPLLVGVLKGSVPFMAELMKHIDTHIEIDFMVVSSYHGGTTSSGEVKILKDVDTNIENRDVIFIEDIIDTGRTLKYLRDMFKYRQANSVRIATLFDKPEGRVVDIDADYVCYKVPNEFIVGFGLDYAENYRNLPYVGVLKEDVYSK.

Diphosphate is bound by residues lysine 43 and glycine 44. Residues glutamate 99 and aspartate 100 each coordinate Mg(2+). The active-site Proton acceptor is the aspartate 103. Residues lysine 131, 152–153, and aspartate 159 each bind GMP; that span reads FI. A diphosphate-binding site is contributed by arginine 165.

The protein belongs to the purine/pyrimidine phosphoribosyltransferase family. Mg(2+) is required as a cofactor.

It is found in the cytoplasm. It catalyses the reaction IMP + diphosphate = hypoxanthine + 5-phospho-alpha-D-ribose 1-diphosphate. The enzyme catalyses GMP + diphosphate = guanine + 5-phospho-alpha-D-ribose 1-diphosphate. Its pathway is purine metabolism; IMP biosynthesis via salvage pathway; IMP from hypoxanthine: step 1/1. It participates in purine metabolism; GMP biosynthesis via salvage pathway; GMP from guanine: step 1/1. Functionally, purine salvage pathway enzyme that catalyzes the transfer of the ribosyl-5-phosphate group from 5-phospho-alpha-D-ribose 1-diphosphate (PRPP) to the N9 position of the 6-oxopurines hypoxanthine and guanine to form the corresponding ribonucleotides IMP (inosine 5'-monophosphate) and GMP (guanosine 5'-monophosphate), with the release of PPi. This is Hypoxanthine-guanine phosphoribosyltransferase (hpt) from Streptococcus mutans serotype c (strain ATCC 700610 / UA159).